Reading from the N-terminus, the 228-residue chain is Urease accessory protein UreF (228 aa).

Belongs to the UreF family. In terms of assembly, ureD, UreF and UreG form a complex that acts as a GTP-hydrolysis-dependent molecular chaperone, activating the urease apoprotein by helping to assemble the nickel containing metallocenter of UreC. The UreE protein probably delivers the nickel.

The protein localises to the cytoplasm. In terms of biological role, required for maturation of urease via the functional incorporation of the urease nickel metallocenter. This Yersinia pseudotuberculosis serotype IB (strain PB1/+) protein is Urease accessory protein UreF.